Reading from the N-terminus, the 340-residue chain is Photosystem II protein D1 (340 aa).

3 helical membrane passes run 25–42 (YIGWFGLLVFPLLSLATV), 114–129 (HFFLGVCGWMGREWEF), and 138–152 (WIFVAFSAPIAAAAA). Chlorophyll a is bound at residue His-114. A pheophytin a-binding site is contributed by Trp-122. [CaMn4O5] cluster-binding residues include Asp-166 and Glu-185. Residues 193-214 (FHILGVAGVFGGSLFSAMHGSL) form a helical membrane-spanning segment. Position 194 (His-194) interacts with chlorophyll a. A quinone-binding positions include His-211 and 260–261 (SF). Residue His-211 coordinates Fe cation. A Fe cation-binding site is contributed by His-268. Residues 270–284 (FLAAWPVIGIWFTSL) form a helical membrane-spanning segment. Residues His-328, Glu-329, Asp-338, and Ala-340 each coordinate [CaMn4O5] cluster.

Belongs to the reaction center PufL/M/PsbA/D family. As to quaternary structure, PSII is composed of 1 copy each of membrane proteins PsbA, PsbB, PsbC, PsbD, PsbE, PsbF, PsbH, PsbI, PsbJ, PsbK, PsbL, PsbM, PsbT, PsbX, PsbY, PsbZ, Psb30/Ycf12, at least 3 peripheral proteins of the oxygen-evolving complex and a large number of cofactors. It forms dimeric complexes. The D1/D2 heterodimer binds P680, chlorophylls that are the primary electron donor of PSII, and subsequent electron acceptors. It shares a non-heme iron and each subunit binds pheophytin, quinone, additional chlorophylls, carotenoids and lipids. D1 provides most of the ligands for the Mn4-Ca-O5 cluster of the oxygen-evolving complex (OEC). There is also a Cl(-1) ion associated with D1 and D2, which is required for oxygen evolution. The PSII complex binds additional chlorophylls, carotenoids and specific lipids. is required as a cofactor. Post-translationally, tyr-157 forms a radical intermediate that is referred to as redox-active TyrZ, YZ or Y-Z.

It is found in the plastid. The protein resides in the chloroplast thylakoid membrane. The catalysed reaction is 2 a plastoquinone + 4 hnu + 2 H2O = 2 a plastoquinol + O2. Photosystem II (PSII) is a light-driven water:plastoquinone oxidoreductase that uses light energy to abstract electrons from H(2)O, generating O(2) and a proton gradient subsequently used for ATP formation. It consists of a core antenna complex that captures photons, and an electron transfer chain that converts photonic excitation into a charge separation. The D1/D2 (PsbA/PsbD) reaction center heterodimer binds P680, the primary electron donor of PSII as well as several subsequent electron acceptors. The protein is Photosystem II protein D1 of Amphidinium operculatum (Dinoflagellate).